We begin with the raw amino-acid sequence, 92 residues long: Signal peptidase complex subunit 1 (92 aa).

Residues 1–12 (MDWQGQKLVEQL) are Cytoplasmic-facing. The chain crosses the membrane as a helical span at residues 13 to 30 (MQILLVISGVVAVVVGYT). The Lumenal portion of the chain corresponds to 31-36 (TESFRT). The helical transmembrane segment at 37 to 59 (MMLIYAGGVVLTTLVTVPNWPFY) threads the bilayer. The Cytoplasmic portion of the chain corresponds to 60-92 (NLHPLKWLDPSEAEKHPKPEVVSVASKKKFSKK). The interval 73-92 (EKHPKPEVVSVASKKKFSKK) is disordered.

This sequence belongs to the SPCS1 family. As to quaternary structure, component of the signal peptidase complex (SPC) composed of a catalytic subunit SEC11 and three accessory subunits SPCS1, SPCS2 and SPCS3. The complex induces a local thinning of the ER membrane which is used to measure the length of the signal peptide (SP) h-region of protein substrates. This ensures the selectivity of the complex towards h-regions shorter than 18-20 amino acids.

It is found in the endoplasmic reticulum membrane. In terms of biological role, component of the signal peptidase complex (SPC) which catalyzes the cleavage of N-terminal signal sequences from nascent proteins as they are translocated into the lumen of the endoplasmic reticulum. Dispensable for SPC enzymatic activity. The sequence is that of Signal peptidase complex subunit 1 from Arabidopsis thaliana (Mouse-ear cress).